Here is a 205-residue protein sequence, read N- to C-terminus: Orotate phosphoribosyltransferase (205 aa).

A 5-phospho-alpha-D-ribose 1-diphosphate-binding site is contributed by 116-124 (EDIITTGGS). Orotate contacts are provided by Thr-120 and Arg-148.

It belongs to the purine/pyrimidine phosphoribosyltransferase family. PyrE subfamily. As to quaternary structure, homodimer. Mg(2+) serves as cofactor.

It carries out the reaction orotidine 5'-phosphate + diphosphate = orotate + 5-phospho-alpha-D-ribose 1-diphosphate. It participates in pyrimidine metabolism; UMP biosynthesis via de novo pathway; UMP from orotate: step 1/2. Functionally, catalyzes the transfer of a ribosyl phosphate group from 5-phosphoribose 1-diphosphate to orotate, leading to the formation of orotidine monophosphate (OMP). In Wolinella succinogenes (strain ATCC 29543 / DSM 1740 / CCUG 13145 / JCM 31913 / LMG 7466 / NCTC 11488 / FDC 602W) (Vibrio succinogenes), this protein is Orotate phosphoribosyltransferase.